We begin with the raw amino-acid sequence, 550 residues long: Hydroxylamine reductase (550 aa).

[2Fe-2S] cluster is bound by residues C3, C6, C18, and C25. Hybrid [4Fe-2O-2S] cluster contacts are provided by H249, E273, C317, C405, C433, C458, E492, and K494. Position 405 is a cysteine persulfide (C405).

This sequence belongs to the HCP family. [2Fe-2S] cluster is required as a cofactor. It depends on hybrid [4Fe-2O-2S] cluster as a cofactor.

It is found in the cytoplasm. It catalyses the reaction A + NH4(+) + H2O = hydroxylamine + AH2 + H(+). Catalyzes the reduction of hydroxylamine to form NH(3) and H(2)O. The chain is Hydroxylamine reductase from Salmonella schwarzengrund (strain CVM19633).